The primary structure comprises 526 residues: Methane monooxygenase component A alpha chain (526 aa).

Residues glutamate 114, glutamate 144, and histidine 147 each coordinate Fe cation. The active site involves cysteine 151. Glutamate 209, glutamate 243, and histidine 246 together coordinate Fe cation.

This sequence belongs to the TmoA/XamoA family. In terms of assembly, m.trichosporium has two forms of methane monooxygenase, a soluble and a membrane-bound type. The soluble type consists of four components (A to D): protein A, comprising three chains, in an alpha-2, beta-2, gamma-2 configuration, is a nonheme iron protein containing an unusual mu-hydroxo bridge structure at its active site and interacts with both oxygen and methane. It depends on Fe cation as a cofactor.

The enzyme catalyses methane + NADH + O2 + H(+) = methanol + NAD(+) + H2O. It catalyses the reaction methane + NADPH + O2 + H(+) = methanol + NADP(+) + H2O. Functionally, responsible for the initial oxygenation of methane to methanol in methanotrophs. It also catalyzes the monohydroxylation of a variety of unactivated alkenes, alicyclic, aromatic and heterocyclic compounds. This Methylosinus trichosporium protein is Methane monooxygenase component A alpha chain (mmoX).